The primary structure comprises 547 residues: Heme-binding protein A (547 aa).

The N-terminal stretch at 1 to 18 (MKLKATLTLAAATLVLAA) is a signal peptide. Cys-19 carries the N-palmitoyl cysteine lipid modification. Cys-19 carries S-diacylglycerol cysteine lipidation.

Belongs to the bacterial solute-binding protein 5 family.

It is found in the cell inner membrane. Its function is as follows. Important role in heme acquisition or metabolism. The polypeptide is Heme-binding protein A (hbpA) (Haemophilus influenzae (strain ATCC 51907 / DSM 11121 / KW20 / Rd)).